A 740-amino-acid chain; its full sequence is Catalase-peroxidase (740 aa).

Positions 102–229 (WHAAGTYRTG…LAAIQMGLIY (128 aa)) form a cross-link, tryptophyl-tyrosyl-methioninium (Trp-Tyr) (with M-256). Histidine 103 acts as the Proton acceptor in catalysis. The interval 111–130 (GDGRGGSSSGQQRFAPLNSW) is disordered. The segment at residues 229 to 256 (YVNPEGPGGDPHDPEGMARDMRETFARM) is a cross-link (tryptophyl-tyrosyl-methioninium (Tyr-Met) (with W-102)). Histidine 271 serves as a coordination point for heme b.

Belongs to the peroxidase family. Peroxidase/catalase subfamily. Homodimer or homotetramer. Heme b is required as a cofactor. Formation of the three residue Trp-Tyr-Met cross-link is important for the catalase, but not the peroxidase activity of the enzyme.

The catalysed reaction is H2O2 + AH2 = A + 2 H2O. It catalyses the reaction 2 H2O2 = O2 + 2 H2O. Its function is as follows. Bifunctional enzyme with both catalase and broad-spectrum peroxidase activity. This chain is Catalase-peroxidase, found in Erythrobacter litoralis (strain HTCC2594).